Here is a 540-residue protein sequence, read N- to C-terminus: 2-isopropylmalate synthase (540 aa).

The Pyruvate carboxyltransferase domain occupies 8-273; the sequence is VLIFDTTLRD…FFGRDQDSPT (266 aa). Asp17, His208, His210, and Asn244 together coordinate Mn(2+). The tract at residues 408 to 540 is regulatory domain; that stretch reads QLQLVQVSCG…AVVLDARPTL (133 aa).

This sequence belongs to the alpha-IPM synthase/homocitrate synthase family. LeuA type 1 subfamily. In terms of assembly, homodimer. It depends on Mn(2+) as a cofactor.

It localises to the cytoplasm. It carries out the reaction 3-methyl-2-oxobutanoate + acetyl-CoA + H2O = (2S)-2-isopropylmalate + CoA + H(+). It participates in amino-acid biosynthesis; L-leucine biosynthesis; L-leucine from 3-methyl-2-oxobutanoate: step 1/4. Functionally, catalyzes the condensation of the acetyl group of acetyl-CoA with 3-methyl-2-oxobutanoate (2-ketoisovalerate) to form 3-carboxy-3-hydroxy-4-methylpentanoate (2-isopropylmalate). The polypeptide is 2-isopropylmalate synthase (Parasynechococcus marenigrum (strain WH8102)).